The chain runs to 324 residues: Meiotic recombination protein DLH1 (324 aa).

Position 112–119 (112–119) interacts with ATP; it reads GEFRCGKT. Arginine 214 contacts dsDNA. SsDNA is bound by residues arginine 214, tyrosine 217, arginine 220, arginine 226, and arginine 296. DsDNA-binding residues include arginine 220 and arginine 226.

It belongs to the RecA family. DMC1 subfamily. In terms of assembly, double stacked ring-shaped homooctamer.

The protein resides in the nucleus. In terms of biological role, required for meiotic recombination, synaptonemal complex formation and cell cycle progression. The sequence is that of Meiotic recombination protein DLH1 (DLH1) from Candida albicans (Yeast).